Reading from the N-terminus, the 118-residue chain is Co-chaperonin GroES (118 aa).

Belongs to the GroES chaperonin family. Heptamer of 7 subunits arranged in a ring. Interacts with the chaperonin GroEL.

It is found in the cytoplasm. Functionally, together with the chaperonin GroEL, plays an essential role in assisting protein folding. The GroEL-GroES system forms a nano-cage that allows encapsulation of the non-native substrate proteins and provides a physical environment optimized to promote and accelerate protein folding. GroES binds to the apical surface of the GroEL ring, thereby capping the opening of the GroEL channel. The sequence is that of Co-chaperonin GroES from Helicobacter pylori (strain G27).